The sequence spans 638 residues: uncharacterized protein (638 aa).

This is an uncharacterized protein from Bos taurus (Bovine).